The primary structure comprises 241 residues: Meiotically up-regulated gene 130 protein (241 aa).

It is found in the mitochondrion. Its function is as follows. Has a role in meiosis. This chain is Meiotically up-regulated gene 130 protein (mug130), found in Schizosaccharomyces pombe (strain 972 / ATCC 24843) (Fission yeast).